We begin with the raw amino-acid sequence, 344 residues long: Eukaryotic translation initiation factor 2 subunit alpha homolog (344 aa).

Residues D21–R92 form the S1 motif domain. S56 carries the post-translational modification Phosphoserine; by GCN2. The segment at D312–E344 is disordered. Residues E314–L336 are compositionally biased toward acidic residues.

The protein belongs to the eIF-2-alpha family. As to quaternary structure, heterotrimer composed of an alpha, a beta and a gamma chain. Post-translationally, phosphorylated at Ser-56 by GCN2.

In terms of biological role, functions in the early steps of protein synthesis by forming a ternary complex with GTP and initiator tRNA. This complex binds to a 40S ribosomal subunit, followed by mRNA binding to form a 43S pre-initiation complex. Junction of the 60S ribosomal subunit to form the 80S initiation complex is preceded by hydrolysis of the GTP bound to eIF-2 and release of an eIF-2-GDP binary complex. In order for eIF-2 to recycle and catalyze another round of initiation, the GDP bound to eIF-2 must exchange with GTP by way of a reaction catalyzed by eIF-2B. The sequence is that of Eukaryotic translation initiation factor 2 subunit alpha homolog from Arabidopsis thaliana (Mouse-ear cress).